Here is a 569-residue protein sequence, read N- to C-terminus: Paxillin-B (569 aa).

An LD motif 1 motif is present at residues 10–18; that stretch reads DLDLLLADL. Positions 62 to 78 are enriched in polar residues; sequence QPQTVQTISTPAPKNHN. Residues 62–103 are disordered; the sequence is QPQTVQTISTPAPKNHNTTTTTASFSVSSQPAPQPPQQSQQI. Residues 79-102 show a composition bias toward low complexity; sequence TTTTTASFSVSSQPAPQPPQQSQQ. The LD motif 2 motif lies at 106–112; sequence LDDLDEL. The segment at 129–311 is disordered; the sequence is TTPEEHITHA…SPKVVHGDDL (183 aa). Positions 150 to 161 are enriched in low complexity; that stretch reads NTSSTNSASSLS. 2 stretches are compositionally biased toward polar residues: residues 162 to 188 and 196 to 206; these read RPNNNPSVVSTPQPGKVTSTATITTKK and TLETTSGNNVY. The span at 207–217 shows a compositional bias: low complexity; that stretch reads SSQPSQSQPQP. An LD motif 3 motif is present at residues 232-239; the sequence is LDELLKGL. The segment covering 258–272 has biased composition (basic residues); sequence HQHHHQHQHHHHHNP. Residues 273-301 show a composition bias toward low complexity; that stretch reads NHNQTQTVTTQINIGRTNTPNNNNNNNTN. The short motif at 311–318 is the LD motif 4 element; that stretch reads LDNLLNNL. 4 consecutive LIM zinc-binding domains span residues 334 to 391, 393 to 452, 453 to 510, and 511 to 569; these read GTCG…QELF, ARCA…TFAV, RCGG…QQAG, and SVCS…KLFA.

The protein belongs to the paxillin family. Expressed in the upper and lower cup of the fruiting body.

It is found in the cytoplasm. The protein localises to the cell cortex. Its subcellular location is the cell projection. It localises to the filopodium. The protein resides in the cell junction. It is found in the focal adhesion. The protein localises to the cytoskeleton. Its function is as follows. Required for cell-substrate adhesion, cell sorting, slug migration, and cell differentiation. May function upstream of limB. This chain is Paxillin-B (paxB), found in Dictyostelium discoideum (Social amoeba).